A 336-amino-acid polypeptide reads, in one-letter code: Glyceraldehyde-3-phosphate dehydrogenase (336 aa).

NAD(+) is bound by residues 12–13, Asp-34, and Arg-79; that span reads RI. Residues 150-152, Thr-181, 210-211, and Arg-233 each bind D-glyceraldehyde 3-phosphate; these read SCT and TG. Cys-151 functions as the Nucleophile in the catalytic mechanism. Asn-315 lines the NAD(+) pocket.

Belongs to the glyceraldehyde-3-phosphate dehydrogenase family. Homotetramer.

The protein resides in the cytoplasm. The enzyme catalyses D-glyceraldehyde 3-phosphate + phosphate + NAD(+) = (2R)-3-phospho-glyceroyl phosphate + NADH + H(+). Its pathway is carbohydrate degradation; glycolysis; pyruvate from D-glyceraldehyde 3-phosphate: step 1/5. Involved in osmoadaptation. The protein is Glyceraldehyde-3-phosphate dehydrogenase (gpdA) of Emericella nidulans (strain FGSC A4 / ATCC 38163 / CBS 112.46 / NRRL 194 / M139) (Aspergillus nidulans).